We begin with the raw amino-acid sequence, 125 residues long: MPTINQLVRQGRTVEKINSKSPAMQNSPQRRGVCTRVYTTTPKKPNSALRKVAKVRLTNGFEVISYIGGEGHNLQEHSVVLVRGGRVKDLPGVRYHIVRGSLDLQGVKDRKQSRSKYGAKRPKKA.

The residue at position 89 (Asp-89) is a 3-methylthioaspartic acid. A disordered region spans residues 106-125 (GVKDRKQSRSKYGAKRPKKA). A compositionally biased stretch (basic residues) spans 113 to 125 (SRSKYGAKRPKKA).

It belongs to the universal ribosomal protein uS12 family. As to quaternary structure, part of the 30S ribosomal subunit. Contacts proteins S8 and S17. May interact with IF1 in the 30S initiation complex.

Its function is as follows. With S4 and S5 plays an important role in translational accuracy. In terms of biological role, interacts with and stabilizes bases of the 16S rRNA that are involved in tRNA selection in the A site and with the mRNA backbone. Located at the interface of the 30S and 50S subunits, it traverses the body of the 30S subunit contacting proteins on the other side and probably holding the rRNA structure together. The combined cluster of proteins S8, S12 and S17 appears to hold together the shoulder and platform of the 30S subunit. The chain is Small ribosomal subunit protein uS12 from Variovorax paradoxus (strain S110).